Here is a 288-residue protein sequence, read N- to C-terminus: uncharacterized protein (288 aa).

This sequence to M.bovis Mb1522c, M.leprae ML1804 and M.avium MAV321.

This is an uncharacterized protein from Mycobacterium tuberculosis (strain ATCC 25618 / H37Rv).